A 229-amino-acid polypeptide reads, in one-letter code: Uracil-DNA glycosylase (229 aa).

Aspartate 64 functions as the Proton acceptor in the catalytic mechanism.

The protein belongs to the uracil-DNA glycosylase (UDG) superfamily. UNG family. In terms of assembly, monomer.

Its subcellular location is the cytoplasm. It catalyses the reaction Hydrolyzes single-stranded DNA or mismatched double-stranded DNA and polynucleotides, releasing free uracil.. In terms of biological role, excises uracil residues from the DNA which can arise as a result of misincorporation of dUMP residues by DNA polymerase or due to deamination of cytosine. The sequence is that of Uracil-DNA glycosylase from Escherichia coli O157:H7.